The following is a 628-amino-acid chain: Biosynthetic arginine decarboxylase (628 aa).

Residue lysine 101 is modified to N6-(pyridoxal phosphate)lysine. 281-291 (VDVGGGLGVDY) is a binding site for substrate.

This sequence belongs to the Orn/Lys/Arg decarboxylase class-II family. SpeA subfamily. Mg(2+) serves as cofactor. Requires pyridoxal 5'-phosphate as cofactor.

It catalyses the reaction L-arginine + H(+) = agmatine + CO2. Its pathway is amine and polyamine biosynthesis; agmatine biosynthesis; agmatine from L-arginine: step 1/1. Its function is as follows. Catalyzes the biosynthesis of agmatine from arginine. This Alkalilimnicola ehrlichii (strain ATCC BAA-1101 / DSM 17681 / MLHE-1) protein is Biosynthetic arginine decarboxylase.